We begin with the raw amino-acid sequence, 426 residues long: D-tagatose-1,6-bisphosphate aldolase subunit KbaZ (426 aa).

It belongs to the GatZ/KbaZ family. KbaZ subfamily. As to quaternary structure, forms a complex with KbaY.

Its pathway is carbohydrate metabolism; D-tagatose 6-phosphate degradation; D-glyceraldehyde 3-phosphate and glycerone phosphate from D-tagatose 6-phosphate: step 2/2. Its function is as follows. Component of the tagatose-1,6-bisphosphate aldolase KbaYZ that is required for full activity and stability of the Y subunit. Could have a chaperone-like function for the proper and stable folding of KbaY. When expressed alone, KbaZ does not show any aldolase activity. The protein is D-tagatose-1,6-bisphosphate aldolase subunit KbaZ of Escherichia coli O139:H28 (strain E24377A / ETEC).